The following is a 332-amino-acid chain: Ribosomal RNA small subunit methyltransferase C (332 aa).

This sequence belongs to the methyltransferase superfamily. RsmC family. As to quaternary structure, monomer.

It localises to the cytoplasm. It catalyses the reaction guanosine(1207) in 16S rRNA + S-adenosyl-L-methionine = N(2)-methylguanosine(1207) in 16S rRNA + S-adenosyl-L-homocysteine + H(+). Functionally, specifically methylates the guanine in position 1207 of 16S rRNA in the 30S particle. This is Ribosomal RNA small subunit methyltransferase C from Pseudomonas aeruginosa (strain LESB58).